Reading from the N-terminus, the 88-residue chain is uncharacterized protein (88 aa).

A signal peptide spans 1–24; that stretch reads MLPRSCKDFYETLRTAVLCGQACA.

To Rhizobium NGR234A y4oL.

This is an uncharacterized protein from Sinorhizobium fredii (strain NBRC 101917 / NGR234).